The following is a 635-amino-acid chain: Cationic amino acid transporter 4 (635 aa).

3 consecutive transmembrane segments (helical) span residues 42–62, 66–86, and 113–133; these read LTLL…TGAV, VAGP…LLAA, and LWAF…GAAV. Residues N151 and N195 are each glycosylated (N-linked (GlcNAc...) asparagine). Residues 197-217 form a helical membrane-spanning segment; it reads TFSAISLLVILFIVILGFILA. N-linked (GlcNAc...) asparagine glycosylation is present at N221. Transmembrane regions (helical) follow at residues 229–249, 270–290, 318–338, 365–385, and 391–411; these read FAPF…YAFV, LAIA…STVL, GFIV…SLLF, QVPV…ALLL, and VQFL…SIIV. A phosphoserine mark is found at S422 and S427. A helical transmembrane segment spans residues 478-498; the sequence is VTWALGVMLASAITIGCVLVF. The N-linked (GlcNAc...) asparagine glycan is linked to N500. A run of 3 helical transmembrane segments spans residues 508-528, 539-559, and 567-587; these read WGYI…LLVL, LFQI…NICL, and TWVR…GYGI. The N-linked (GlcNAc...) asparagine glycan is linked to N601.

It belongs to the amino acid-polyamine-organocation (APC) superfamily. Cationic amino acid transporter (CAT) (TC 2.A.3.3) family.

The protein resides in the membrane. Functionally, involved in the transport of the cationic amino acids (arginine, lysine and ornithine). In Homo sapiens (Human), this protein is Cationic amino acid transporter 4 (SLC7A4).